The sequence spans 129 residues: uncharacterized protein (129 aa).

The chain crosses the membrane as a helical span at residues 5-25; the sequence is IIGLTLAFFVLFLTAVAILFT.

Its subcellular location is the membrane. This is an uncharacterized protein from Mycoplasma pneumoniae (strain ATCC 29342 / M129 / Subtype 1) (Mycoplasmoides pneumoniae).